A 471-amino-acid polypeptide reads, in one-letter code: Glutamate--tRNA ligase (471 aa).

The 'HIGH' region signature appears at 9–19; that stretch reads PSPTGFLHVGG. The Zn(2+) site is built by cysteine 98, cysteine 100, cysteine 125, and aspartate 127. The 'KMSKS' region signature appears at 237 to 241; that stretch reads KLSKR. Lysine 240 is an ATP binding site.

This sequence belongs to the class-I aminoacyl-tRNA synthetase family. Glutamate--tRNA ligase type 1 subfamily. Monomer. It depends on Zn(2+) as a cofactor.

The protein resides in the cytoplasm. It carries out the reaction tRNA(Glu) + L-glutamate + ATP = L-glutamyl-tRNA(Glu) + AMP + diphosphate. Functionally, catalyzes the attachment of glutamate to tRNA(Glu) in a two-step reaction: glutamate is first activated by ATP to form Glu-AMP and then transferred to the acceptor end of tRNA(Glu). This Aeromonas salmonicida (strain A449) protein is Glutamate--tRNA ligase.